Reading from the N-terminus, the 448-residue chain is MSQSTATYINVIGAGLAGSEAAYQIAKRGIPVKLYEMRGVKATPQHKTTNFAELVCSNSFRGDSLTNAVGLLKEEMRRLDSIIMRNGEANRVPAGGAMAVDREGYAESVTAELENHPLIEVIRDEITEIPDDAITVIATGPLTSDALAEKIHALNGGDGFYFYDAAAPIIDKSTIDMSKVYLKSRYDKGEAAYLNCPMTKEEFMAFHEALTTAEEAPLNSFEKEKYFEGCMPIEVMAKRGIKTMLYGPMKPVGLEYPDDYTGPRDGEFKTPYAVVQLRQDNTAGSLYNIVGFQTHLKWGEQKRVFQMIPGLENAEFVRYGVMHRNSYMDSPNLLTETFQSRRNPNLFFAGQMTGVEGYVESAASGLVAGINAARLFKREEALIFPQTTAIGSLPHYVTHADSKHFQPMNVNFGIIKELEGLRIRDKKERYEAIASRALADLDTCLASL.

13–18 (GAGLAG) contacts FAD.

Belongs to the MnmG family. TrmFO subfamily. Requires FAD as cofactor.

The protein localises to the cytoplasm. The catalysed reaction is uridine(54) in tRNA + (6R)-5,10-methylene-5,6,7,8-tetrahydrofolate + NADH + H(+) = 5-methyluridine(54) in tRNA + (6S)-5,6,7,8-tetrahydrofolate + NAD(+). The enzyme catalyses uridine(54) in tRNA + (6R)-5,10-methylene-5,6,7,8-tetrahydrofolate + NADPH + H(+) = 5-methyluridine(54) in tRNA + (6S)-5,6,7,8-tetrahydrofolate + NADP(+). In terms of biological role, catalyzes the folate-dependent formation of 5-methyl-uridine at position 54 (M-5-U54) in all tRNAs. The sequence is that of Methylenetetrahydrofolate--tRNA-(uracil-5-)-methyltransferase TrmFO from Streptococcus pyogenes serotype M2 (strain MGAS10270).